We begin with the raw amino-acid sequence, 233 residues long: ATP synthase subunit a (233 aa).

Helical transmembrane passes span 27–47 (ANFVTMQLLVVAIIVVLFAIL), 85–105 (YLAFFGTIFIFILFANLIGVV), 114–134 (VPSVPAGCAIAAFFYYNIVGV), 143–163 (LAHFAGPMPLLAPLMIPIELV), 189–209 (VFLKLTFLFVPAVFMGLHVFV), and 210–230 (SFLQAYIFMLLTMMYVAGAVA).

The protein belongs to the ATPase A chain family. F-type ATPases have 2 components, CF(1) - the catalytic core - and CF(0) - the membrane proton channel. CF(1) has five subunits: alpha(3), beta(3), gamma(1), delta(1), epsilon(1). CF(0) has three main subunits: a(1), b(2) and c(9-12). The alpha and beta chains form an alternating ring which encloses part of the gamma chain. CF(1) is attached to CF(0) by a central stalk formed by the gamma and epsilon chains, while a peripheral stalk is formed by the delta and b chains.

The protein localises to the cell inner membrane. Key component of the proton channel; it plays a direct role in the translocation of protons across the membrane. This is ATP synthase subunit a from Solibacter usitatus (strain Ellin6076).